Reading from the N-terminus, the 81-residue chain is Putative membrane protein insertion efficiency factor (81 aa).

The tract at residues 61-81 (NPGGYDPVPPIPTSRSSSMAE) is disordered.

It belongs to the UPF0161 family.

Its subcellular location is the cell inner membrane. Functionally, could be involved in insertion of integral membrane proteins into the membrane. This chain is Putative membrane protein insertion efficiency factor, found in Pseudomonas fluorescens (strain Pf0-1).